Here is a 72-residue protein sequence, read N- to C-terminus: Probable neurotoxin pcD-993 (72 aa).

Residues 1 to 19 (MNYLVMISFALLLVIGVES) form the signal peptide. The region spanning 21-72 (RDGYFVEPDNCVVHCMPSSEMCDRGCKHNGATSGSCKAFSKGGNACWCKGLR) is the LCN-type CS-alpha/beta domain. Disulfide bonds link C35–C56, C42–C66, and C46–C68. R72 is a propeptide (removed by a carboxypeptidase).

This sequence belongs to the long (3 C-C) scorpion toxin superfamily. Expressed by the venom gland.

Its subcellular location is the secreted. The polypeptide is Probable neurotoxin pcD-993 (Androctonus australis (Sahara scorpion)).